The sequence spans 507 residues: ATP synthase subunit beta (507 aa).

Positions 1–22 are disordered; that stretch reads MSSLANKAKSKGKSSKSKSNVN. Residue 183–190 participates in ATP binding; the sequence is GGAGVGKT.

Belongs to the ATPase alpha/beta chains family. As to quaternary structure, F-type ATPases have 2 components, CF(1) - the catalytic core - and CF(0) - the membrane proton channel. CF(1) has five subunits: alpha(3), beta(3), gamma(1), delta(1), epsilon(1). CF(0) has three main subunits: a(1), b(2) and c(9-12). The alpha and beta chains form an alternating ring which encloses part of the gamma chain. CF(1) is attached to CF(0) by a central stalk formed by the gamma and epsilon chains, while a peripheral stalk is formed by the delta and b chains.

It is found in the cell inner membrane. The enzyme catalyses ATP + H2O + 4 H(+)(in) = ADP + phosphate + 5 H(+)(out). In terms of biological role, produces ATP from ADP in the presence of a proton gradient across the membrane. The catalytic sites are hosted primarily by the beta subunits. The protein is ATP synthase subunit beta of Ehrlichia canis (strain Jake).